Here is a 486-residue protein sequence, read N- to C-terminus: Bile acid receptor (486 aa).

Lys-132 participates in a covalent cross-link: Glycyl lysine isopeptide (Lys-Gly) (interchain with G-Cter in SUMO1). Positions 134–209 form a DNA-binding region, nuclear receptor; it reads DELCVVCGDR…MGMLAECMYT (76 aa). The segment at 137–157 adopts an NR C4-type zinc-finger fold; sequence CVVCGDRASGYHYNALTCEGC. 2 positions are modified to phosphoserine; by PKC/PRKCA: Ser-145 and Ser-164. Lys-167 bears the N6-acetyllysine; by EP300 mark. The NR C4-type zinc-finger motif lies at 173 to 197; that stretch reads CKNGGNCVMDMYMRRKCQECRLRKC. Lys-220 is subject to N6-methyllysine; by SETD7. Lys-227 bears the N6-acetyllysine; by EP300 mark. Residues 262–486 form the NR LBD domain; sequence DQQTLLHFIM…PLLCEIWDVQ (225 aa). Residue Lys-289 forms a Glycyl lysine isopeptide (Lys-Gly) (interchain with G-Cter in SUMO1) linkage. Positions 345, 375, and 383 each coordinate chenodeoxycholate. Thr-456 carries the phosphothreonine; by PKC/PRKCZ modification. His-461 is a binding site for chenodeoxycholate.

The protein belongs to the nuclear hormone receptor family. NR1 subfamily. As to quaternary structure, heterodimer (via C-terminus) with RXRA (via DBD); the heterodimerization enhances the binding affinity for LXXLL motifs from coactivators. Binds DNA predominantly as a heterodimer with RXRA. After activation by agonist binding interacts with coactivators. Interacts with NCOA1, NCOA2, PPARGC1A, CARM1, SETD7, PRMT1, GPS2, SMARCA4 and MED1. Interacts with EP300 and SMARCD1. Interacts with XRCC5 and XRCC6; decreasing NR1H4/FXR transactivation activity towards ABCB11/BSEP. Interacts with PAGR1 and NCOA6; indicative for an association with an MLL2/MLL3 complex (ASCOM). Acetylated by EP300. Lys-227 as is the major acetylation site for EP300; the dynamicly regulated acetylation inhibits heterodimerization with RXRA and transactivation activity. Deacetylated by SIRT1. In terms of processing, methylation may increase transactivation of target genes. Post-translationally, phosphorylation by PKC/PRKCA increases transactivation activity by promoting association with PPARGC1A. Sumoylated upon ligand binding. Liver and hepatocyte-related cells express mainly FXRalpha1-type isoforms with isoform 3 and isoform 4 in approximately equal proportions. In intestine and kidney mainly FXRalpha2-type isoforms are expressed with isoform 1 and isoform 2 in approximately equal proportions. Expressed in pancreatic beta cells and macrophages.

The protein localises to the nucleus. Functionally, ligand-activated transcription factor. Receptor for bile acids (BAs) such as chenodeoxycholic acid (CDCA), lithocholic acid, deoxycholic acid (DCA) and allocholic acid (ACA). Plays a essential role in BA homeostasis through the regulation of genes involved in BA synthesis, conjugation and enterohepatic circulation. Also regulates lipid and glucose homeostasis and is involved innate immune response. The FXR-RXR heterodimer binds predominantly to farnesoid X receptor response elements (FXREs) containing two inverted repeats of the consensus sequence 5'-AGGTCA-3' in which the monomers are spaced by 1 nucleotide (IR-1) but also to tandem repeat DR1 sites with lower affinity, and can be activated by either FXR or RXR-specific ligands. It is proposed that monomeric nuclear receptors such as NR5A2/LRH-1 bound to coregulatory nuclear responsive element (NRE) halfsites located in close proximity to FXREs modulate transcriptional activity. In the liver activates transcription of the corepressor NR0B2 thereby indirectly inhibiting CYP7A1 and CYP8B1 (involved in BA synthesis) implicating at least in part histone demethylase KDM1A resulting in epigenomic repression, and SLC10A1/NTCP (involved in hepatic uptake of conjugated BAs). Activates transcription of the repressor MAFG (involved in regulation of BA synthesis). Activates transcription of SLC27A5/BACS and BAAT (involved in BA conjugation), ABCB11/BSEP (involved in bile salt export) by directly recruiting histone methyltransferase CARM1, and ABCC2/MRP2 (involved in secretion of conjugated BAs) and ABCB4 (involved in secretion of phosphatidylcholine in the small intestine). Activates transcription of SLC27A5/BACS and BAAT (involved in BA conjugation), ABCB11/BSEP (involved in bile salt export) by directly recruiting histone methyltransferase CARM1, and ABCC2/MRP2 (involved in secretion of conjugated BAs) and ABCB4 (involved in secretion of phosphatidylcholine in the small intestine). In the intestine activates FGF19 expression and secretion leading to hepatic CYP7A1 repression. The function also involves the coordinated induction of hepatic KLB/beta-klotho expression. Regulates transcription of liver UGT2B4 and SULT2A1 involved in BA detoxification; binding to the UGT2B4 promoter seems to imply a monomeric transactivation independent of RXRA. Modulates lipid homeostasis by activating liver NR0B2/SHP-mediated repression of SREBF1 (involved in de novo lipogenesis), expression of PLTP (involved in HDL formation), SCARB1 (involved in HDL hepatic uptake), APOE, APOC1, APOC4, PPARA (involved in beta-oxidation of fatty acids), VLDLR and SDC1 (involved in the hepatic uptake of LDL and IDL remnants), and inhibiting expression of MTTP (involved in VLDL assembly. Increases expression of APOC2 (promoting lipoprotein lipase activity implicated in triglyceride clearance). Transrepresses APOA1 involving a monomeric competition with NR2A1 for binding to a DR1 element. Also reduces triglyceride clearance by inhibiting expression of ANGPTL3 and APOC3 (both involved in inhibition of lipoprotein lipase). Involved in glucose homeostasis by modulating hepatic gluconeogenesis through activation of NR0B2/SHP-mediated repression of respective genes. Modulates glycogen synthesis (inducing phosphorylation of glycogen synthase kinase-3). Modulates glucose-stimulated insulin secretion and is involved in insulin resistance. Involved in intestinal innate immunity. Plays a role in protecting the distal small intestine against bacterial overgrowth and preservation of the epithelial barrier. Down-regulates inflammatory cytokine expression in several types of immune cells including macrophages and mononuclear cells. Mediates trans-repression of TLR4-induced cytokine expression; the function seems to require its sumoylation and prevents N-CoR nuclear receptor corepressor clearance from target genes such as IL1B and NOS2. Involved in the TLR9-mediated protective mechanism in intestinal inflammation. Plays an anti-inflammatory role in liver inflammation; proposed to inhibit pro-inflammatory (but not antiapoptotic) NF-kappa-B signaling). In terms of biological role, promotes transcriptional activation of target genes NR0B2/SHP (inducible by unconjugated CDCA), SLC51B/OSTB (inducible by unconjugated CDCA and DCA) and FABP6/IBAP; low activity for ABCB11/BSEP (inducible by unconjugated CDCA, DCA and ACA); not inducible by taurine- and glycine-amidated CDCA. Promotes transcriptional activation of target genes ABCB11/BSEP (inducible by unconjugated CDCA, DCA and ACA), NR0B2/SHP (inducible by unconjugated CDCA DCA and ACA), SLC51B/OSTB (inducible by unconjugated CDCA and DCA) and FABP6/IBAP; not inducible by taurine- and glycine-amidated CDCA. Its function is as follows. Promotes transcriptional activation of target genes NR0B2/SHP (inducible by unconjugated CDCA), SLC51B/OSTB (inducible by unconjugated CDCA and DCA) and IBAP; low activity for ABCB11/BSEP (inducible by unconjugated CDCA, DCA and ACA); not inducible by taurine- and glycine-amidated CDCA. Functionally, promotes transcriptional activation of target genes ABCB11/BSEP (inducible by unconjugated CDCA, ACA and DCA), NR0B2/SHP (inducible by unconjugated CDCA, ACA and DCA), SLC51B/OSTB (inducible by unconjugated CDCA and DCA) and FABP6/IBAP; most efficient isoform compared to isoforms 1 to 3; not inducible by taurine- and glycine-amidated CDCA. The protein is Bile acid receptor (NR1H4) of Homo sapiens (Human).